Here is a 341-residue protein sequence, read N- to C-terminus: Ribonucleoside-diphosphate reductase subunit beta (341 aa).

Fe cation is bound by residues aspartate 89, glutamate 120, and histidine 123. Residue tyrosine 127 is part of the active site. Positions 185, 219, and 222 each coordinate Fe cation.

This sequence belongs to the ribonucleoside diphosphate reductase small chain family. Tetramer of two alpha and two beta subunits. Fe cation is required as a cofactor.

It catalyses the reaction a 2'-deoxyribonucleoside 5'-diphosphate + [thioredoxin]-disulfide + H2O = a ribonucleoside 5'-diphosphate + [thioredoxin]-dithiol. In terms of biological role, provides the precursors necessary for DNA synthesis. Catalyzes the biosynthesis of deoxyribonucleotides from the corresponding ribonucleotides. The polypeptide is Ribonucleoside-diphosphate reductase subunit beta (nrdB) (Helicobacter pylori (strain J99 / ATCC 700824) (Campylobacter pylori J99)).